Here is a 462-residue protein sequence, read N- to C-terminus: ATP synthase subunit beta (462 aa).

ATP is bound at residue 151–158; the sequence is GGAGVGKT.

It belongs to the ATPase alpha/beta chains family. F-type ATPases have 2 components, CF(1) - the catalytic core - and CF(0) - the membrane proton channel. CF(1) has five subunits: alpha(3), beta(3), gamma(1), delta(1), epsilon(1). CF(0) has three main subunits: a(1), b(2) and c(9-12). The alpha and beta chains form an alternating ring which encloses part of the gamma chain. CF(1) is attached to CF(0) by a central stalk formed by the gamma and epsilon chains, while a peripheral stalk is formed by the delta and b chains.

The protein resides in the cell inner membrane. It catalyses the reaction ATP + H2O + 4 H(+)(in) = ADP + phosphate + 5 H(+)(out). Produces ATP from ADP in the presence of a proton gradient across the membrane. The catalytic sites are hosted primarily by the beta subunits. This chain is ATP synthase subunit beta, found in Chlorobium limicola.